The following is a 485-amino-acid chain: Pumilio domain-containing protein 7 (485 aa).

Residues 29 to 72 (NKTHKNKNPKPPVKLLPYRHGSNTTSSDSDSYIFNSGSGSSDAE) are disordered. Positions 49–71 (GSNTTSSDSDSYIFNSGSGSSDA) are enriched in polar residues. Pumilio repeat units follow at residues 86–124 (DVLL…AVFE), 128–163 (ESTT…ELLR), 164–200 (QMID…QLIQ), 201–236 (ELST…TFFV), 237–279 (HFLS…FRIQ), 287–324 (CIVR…TIID), 326–361 (CLLR…EMME), and 370–411 (DVES…RELP). The RNA-binding stretch occupies residues 439 to 454 (FSSGKKIIDSVMRHGV).

Its function is as follows. RNA-binding protein that binds to the consensus sequence 5'-CUCUGUAUCUUGU-3' in mRNA 3'-UTRs and modulates mRNA expression and stability. Functions redundantly with puf-5 and puf-6 in oocyte formation and organization, early embryonic cell divisions, and repression of expression of glp-1 and other maternal mRNAs in late oogenesis. The chain is Pumilio domain-containing protein 7 from Caenorhabditis elegans.